A 239-amino-acid chain; its full sequence is Leucine rich adaptor protein 1 (239 aa).

2 LRR repeats span residues 55–83 and 93–114; these read LGDK…LVTL and LLEE…QYSL. The span at 105–116 shows a compositional bias: low complexity; the sequence is SSLTSSQYSLTG. Residues 105-138 form a disordered region; the sequence is SSLTSSQYSLTGGSPGRSRRGSWDSLPDTSSTDR. Phosphoserine occurs at positions 118, 126, and 129.

As to quaternary structure, forms a tripartite complex with CDC42BPA/CDC42BPB and MYO18A acting as an adapter connecting both. Its binding to CDC42BPA/CDC42BPB results in their activation by abolition of their negative autoregulation. Interacts with CDC42BPA and CDC42BPB. Phosphorylated.

It localises to the cytoplasm. Its function is as follows. Acts as an activator of the canonical NF-kappa-B pathway and drive the production of pro-inflammatory cytokines. Promotes the antigen (Ag)-presenting and priming function of dendritic cells via the canonical NF-kappa-B pathway. In concert with MYO18A and CDC42BPA/CDC42BPB, is involved in modulating lamellar actomyosin retrograde flow that is crucial to cell protrusion and migration. Activates CDC42BPA/CDC42BPB and targets it to actomyosin through its interaction with MYO18A, leading to MYL9/MLC2 phosphorylation and MYH9/MYH10-dependent actomyosin assembly in the lamella. The protein is Leucine rich adaptor protein 1 (Lurap1) of Mus musculus (Mouse).